The chain runs to 365 residues: Neutral protease 2 homolog mep20 (365 aa).

The signal sequence occupies residues 1-19 (MKVTILASAILALINGALA). The propeptide occupies 20–172 (LPANTPTLDV…PQAIKLLDRR (153 aa)). Residue asparagine 73 is glycosylated (N-linked (GlcNAc...) asparagine). Cystine bridges form between cysteine 178–cysteine 249 and cysteine 256–cysteine 274. Position 299 (histidine 299) interacts with Zn(2+). Glutamate 300 is an active-site residue. 2 residues coordinate Zn(2+): histidine 303 and aspartate 314. An N-linked (GlcNAc...) asparagine glycan is attached at asparagine 351.

It belongs to the peptidase M35 family. It depends on Zn(2+) as a cofactor.

It is found in the secreted. The enzyme catalyses Preferential cleavage of bonds with hydrophobic residues in P1'. Also 3-Asn-|-Gln-4 and 8-Gly-|-Ser-9 bonds in insulin B chain.. In terms of biological role, secreted metalloproteinase that allows assimilation of proteinaceous substrates. Shows high activities on basic nuclear substrates such as histone and protamine. May be involved in virulence. The sequence is that of Neutral protease 2 homolog mep20 (mep20) from Aspergillus fumigatus (Neosartorya fumigata).